The chain runs to 462 residues: Probable Xaa-Pro aminopeptidase NECHADRAFT_60613 (462 aa).

Residues aspartate 259, aspartate 270, glutamate 393, and glutamate 433 each contribute to the Mn(2+) site.

This sequence belongs to the peptidase M24B family. Mn(2+) is required as a cofactor.

The catalysed reaction is Release of any N-terminal amino acid, including proline, that is linked to proline, even from a dipeptide or tripeptide.. Functionally, catalyzes the removal of a penultimate prolyl residue from the N-termini of peptides. This chain is Probable Xaa-Pro aminopeptidase NECHADRAFT_60613, found in Fusarium vanettenii (strain ATCC MYA-4622 / CBS 123669 / FGSC 9596 / NRRL 45880 / 77-13-4) (Fusarium solani subsp. pisi).